The following is a 199-amino-acid chain: Streptomycin biosynthesis protein StrG (199 aa).

It participates in antibiotic biosynthesis; streptomycin biosynthesis. Its function is as follows. May be involved in the formation of N-methyl-L-glucosamine. This is Streptomycin biosynthesis protein StrG (strG) from Streptomyces griseus.